The primary structure comprises 530 residues: UDP-glucuronosyltransferase 2B17 (530 aa).

Residues 1 to 23 (MSLKWMSVFLLMQLSCYFSSGSC) form the signal peptide. The N-linked (GlcNAc...) asparagine glycan is linked to N65. K136 carries the N6-succinyllysine modification. Residues N316 and N483 are each glycosylated (N-linked (GlcNAc...) asparagine). A helical transmembrane segment spans residues 495–515 (IAFLLACVATMIFMITKCCLF).

The protein belongs to the UDP-glycosyltransferase family. In terms of tissue distribution, expressed in various tissues including the liver, kidney, testis, uterus, placenta, mammary gland, adrenal gland, skin and prostate.

It is found in the endoplasmic reticulum membrane. It carries out the reaction glucuronate acceptor + UDP-alpha-D-glucuronate = acceptor beta-D-glucuronoside + UDP + H(+). It catalyses the reaction 17alpha-estradiol + UDP-alpha-D-glucuronate = 17alpha-estradiol 3-O-(beta-D-glucuronate) + UDP + H(+). The enzyme catalyses 17alpha-estradiol + UDP-alpha-D-glucuronate = 17alpha-estradiol 17-O-(beta-D-glucuronate) + UDP + H(+). The catalysed reaction is 17beta-estradiol + UDP-alpha-D-glucuronate = 17beta-estradiol 17-O-(beta-D-glucuronate) + UDP + H(+). It carries out the reaction 17beta-hydroxy-5alpha-androstan-3-one + UDP-alpha-D-glucuronate = 5alpha-dihydrotestosterone 17-O-(beta-D-glucuronate) + UDP + H(+). It catalyses the reaction testosterone + UDP-alpha-D-glucuronate = testosterone 17-O-(beta-D-glucuronate) + UDP + H(+). UDP-glucuronosyltransferase (UGT) that catalyzes phase II biotransformation reactions in which lipophilic substrates are conjugated with glucuronic acid to increase the metabolite's water solubility, thereby facilitating excretion into either the urine or bile. Catalyzes the glucuronidation of endogenous steroid hormones such as androgens (epitestosterone, androsterone) and estrogens (estradiol, epiestradiol). The protein is UDP-glucuronosyltransferase 2B17 of Homo sapiens (Human).